The following is a 425-amino-acid chain: Histidine--tRNA ligase (425 aa).

It belongs to the class-II aminoacyl-tRNA synthetase family. In terms of assembly, homodimer.

Its subcellular location is the cytoplasm. It catalyses the reaction tRNA(His) + L-histidine + ATP = L-histidyl-tRNA(His) + AMP + diphosphate + H(+). This is Histidine--tRNA ligase from Shewanella sp. (strain ANA-3).